The sequence spans 376 residues: Secreted LysM effector LysM9 (376 aa).

Positions 1–25 are cleaved as a signal peptide; it reads MGHFHLSNFIALIGILLVGPTATSG. Residues 41-89 enclose the LysM domain; sequence SKYVVQAGETCSAIAQAHSITTADIETYNAQSWAWTGCGQISQGDFICL. Positions 190 to 219 are disordered; it reads SSETSSSMTTSTSATTSVPTTTSTTTTTKT.

The protein belongs to the secreted LysM effector family.

It is found in the secreted. Secreted LysM effector that might have a role in sequestration of chitin oligosaccharides (breakdown products of fungal cell walls that are released during invasion and act as triggers of host immunity) to dampen host defense. This Penicillium expansum (Blue mold rot fungus) protein is Secreted LysM effector LysM9.